The following is a 176-amino-acid chain: NAD(P)H-quinone oxidoreductase subunit I, chloroplastic (176 aa).

4Fe-4S ferredoxin-type domains are found at residues 55 to 84 and 95 to 124; these read GRIH…VDWE and LNYS…MTEE. Residues C64, C67, C70, C74, C104, C107, C110, and C114 each coordinate [4Fe-4S] cluster.

This sequence belongs to the complex I 23 kDa subunit family. NDH is composed of at least 16 different subunits, 5 of which are encoded in the nucleus. Requires [4Fe-4S] cluster as cofactor.

It is found in the plastid. The protein localises to the chloroplast thylakoid membrane. The catalysed reaction is a plastoquinone + NADH + (n+1) H(+)(in) = a plastoquinol + NAD(+) + n H(+)(out). The enzyme catalyses a plastoquinone + NADPH + (n+1) H(+)(in) = a plastoquinol + NADP(+) + n H(+)(out). In terms of biological role, NDH shuttles electrons from NAD(P)H:plastoquinone, via FMN and iron-sulfur (Fe-S) centers, to quinones in the photosynthetic chain and possibly in a chloroplast respiratory chain. The immediate electron acceptor for the enzyme in this species is believed to be plastoquinone. Couples the redox reaction to proton translocation, and thus conserves the redox energy in a proton gradient. This is NAD(P)H-quinone oxidoreductase subunit I, chloroplastic from Populus trichocarpa (Western balsam poplar).